Reading from the N-terminus, the 259-residue chain is Adenylate kinase (259 aa).

An ATP-binding site is contributed by 52–57; it reads GAGKGT. The tract at residues 72 to 101 is NMP; it reads ATGDMLRSQVAKKTDLGREAKKIMDQGGLV. Residues T73, R78, 99 to 101, 128 to 131, and Q135 contribute to the AMP site; these read GLV and GFPR. Residues 169–206 are LID; that stretch reads GRLVHPASGRSYHKIFNPPKEAMKDDITGEPLVQRSDD. ATP contacts are provided by residues R170 and 179–180; that span reads SY. AMP is bound by residues R203 and R214. Q242 provides a ligand contact to ATP.

It belongs to the adenylate kinase family. AK2 subfamily. As to quaternary structure, monomer.

The protein localises to the cytoplasm. It is found in the mitochondrion intermembrane space. It catalyses the reaction AMP + ATP = 2 ADP. Catalyzes the reversible transfer of the terminal phosphate group between ATP and AMP. Plays an important role in cellular energy homeostasis and in adenine nucleotide metabolism. Adenylate kinase activity is critical for regulation of the phosphate utilization and the AMP de novo biosynthesis pathways. This Emericella nidulans (strain FGSC A4 / ATCC 38163 / CBS 112.46 / NRRL 194 / M139) (Aspergillus nidulans) protein is Adenylate kinase (adk1).